A 412-amino-acid polypeptide reads, in one-letter code: Tryptophan synthase beta chain 1 (412 aa).

Residue lysine 103 is modified to N6-(pyridoxal phosphate)lysine.

Belongs to the TrpB family. As to quaternary structure, tetramer of two alpha and two beta chains. The cofactor is pyridoxal 5'-phosphate.

The catalysed reaction is (1S,2R)-1-C-(indol-3-yl)glycerol 3-phosphate + L-serine = D-glyceraldehyde 3-phosphate + L-tryptophan + H2O. Its pathway is amino-acid biosynthesis; L-tryptophan biosynthesis; L-tryptophan from chorismate: step 5/5. Functionally, the beta subunit is responsible for the synthesis of L-tryptophan from indole and L-serine. This is Tryptophan synthase beta chain 1 (trpB1) from Chlamydia caviae (strain ATCC VR-813 / DSM 19441 / 03DC25 / GPIC) (Chlamydophila caviae).